The chain runs to 210 residues: Outer surface protein C (210 aa).

Residues 1–18 (MKKNTLSAILMTLFLFIS) form the signal peptide. A lipid anchor (N-palmitoyl cysteine) is attached at Cys-19. Cys-19 carries S-diacylglycerol cysteine lipidation.

This sequence belongs to the OspC lipoprotein family. In terms of assembly, homodimer. Binds human plasminogen on the bacterial surface, also binds human plasmin. Interacts with tick I.ricinus salivary protein Iric-1. Interacts with human complement C4 beta chain (C4B); whole bacteria bind to wells coated with C4b. Binding is inhibited by human complement factor C2.

The protein localises to the cell outer membrane. Its subcellular location is the cell surface. Its function is as follows. A major immunodominant protein in mammalian hosts. Required for the initial stages of mammalian infection. Interaction with tick I.ricinus salivary protein Salp15 protects the bacteria from antibody-mediated killing in vitro and in vivo. Inhibits macrophage-mediated phagocytosis of the bacteria. Binds human plasminogen; this probably confers an extracellular protease activity on the bacteria that allows it to traverse tissue. Binds human complement C4-B, which may inhibit the complement cascade. Experiments in mice suggest it may play another role after initial infection. This Borreliella burgdorferi (strain ATCC 35210 / DSM 4680 / CIP 102532 / B31) (Borrelia burgdorferi) protein is Outer surface protein C.